A 706-amino-acid chain; its full sequence is D-(-)-3-hydroxybutyrate oligomer hydrolase (706 aa).

Positions 1 to 32 (MTTTSKNCLTLTSIAAAVAAVLVLSACGGGSA) are cleaved as a signal peptide. The active-site Charge relay system is Ser311.

This sequence belongs to the D-(-)-3-hydroxybutyrate oligomer hydrolase family.

It is found in the secreted. It catalyses the reaction (3R)-hydroxybutanoate dimer + H2O = 2 (R)-3-hydroxybutanoate + H(+). The protein operates within lipid metabolism; butanoate metabolism. Its function is as follows. Participates in the degradation of poly-3-hydroxybutyrate (PHB). It works downstream of poly(3-hydroxybutyrate) depolymerase, hydrolyzing D(-)-3-hydroxybutyrate oligomers of various length (3HB-oligomers) into 3HB-monomers. In Polaromonas sp. (strain JS666 / ATCC BAA-500), this protein is D-(-)-3-hydroxybutyrate oligomer hydrolase.